Reading from the N-terminus, the 191-residue chain is Holliday junction branch migration complex subunit RuvA (191 aa).

A domain I region spans residues 1-64 (MIGRLSGVLL…EDAHILFGFG (64 aa)). Residues 65–137 (TNEERNVFKQ…LKGKLGADLG (73 aa)) form a domain II region. The segment at 137 to 141 (GVAGA) is flexible linker. Positions 142-191 (VATDATSDILNALLALGYSDKEAMLALKQVPAGTGVSDGIKLALKSLSKA) are domain III.

This sequence belongs to the RuvA family. In terms of assembly, homotetramer. Forms an RuvA(8)-RuvB(12)-Holliday junction (HJ) complex. HJ DNA is sandwiched between 2 RuvA tetramers; dsDNA enters through RuvA and exits via RuvB. An RuvB hexamer assembles on each DNA strand where it exits the tetramer. Each RuvB hexamer is contacted by two RuvA subunits (via domain III) on 2 adjacent RuvB subunits; this complex drives branch migration. In the full resolvosome a probable DNA-RuvA(4)-RuvB(12)-RuvC(2) complex forms which resolves the HJ.

Its subcellular location is the cytoplasm. Its function is as follows. The RuvA-RuvB-RuvC complex processes Holliday junction (HJ) DNA during genetic recombination and DNA repair, while the RuvA-RuvB complex plays an important role in the rescue of blocked DNA replication forks via replication fork reversal (RFR). RuvA specifically binds to HJ cruciform DNA, conferring on it an open structure. The RuvB hexamer acts as an ATP-dependent pump, pulling dsDNA into and through the RuvAB complex. HJ branch migration allows RuvC to scan DNA until it finds its consensus sequence, where it cleaves and resolves the cruciform DNA. This is Holliday junction branch migration complex subunit RuvA from Janthinobacterium sp. (strain Marseille) (Minibacterium massiliensis).